The chain runs to 516 residues: 2-isopropylmalate synthase (516 aa).

The 263-residue stretch at 8–270 (IYIFDTTLRD…YTGIKTESIY (263 aa)) folds into the Pyruvate carboxyltransferase domain. Mn(2+) is bound by residues Asp17, His205, His207, and Asn241. A regulatory domain region spans residues 394 to 516 (KLIYLNVVSG…DAGKIKSEYE (123 aa)).

It belongs to the alpha-IPM synthase/homocitrate synthase family. LeuA type 1 subfamily. As to quaternary structure, homodimer. Mn(2+) serves as cofactor.

It localises to the cytoplasm. It catalyses the reaction 3-methyl-2-oxobutanoate + acetyl-CoA + H2O = (2S)-2-isopropylmalate + CoA + H(+). Its pathway is amino-acid biosynthesis; L-leucine biosynthesis; L-leucine from 3-methyl-2-oxobutanoate: step 1/4. Functionally, catalyzes the condensation of the acetyl group of acetyl-CoA with 3-methyl-2-oxobutanoate (2-ketoisovalerate) to form 3-carboxy-3-hydroxy-4-methylpentanoate (2-isopropylmalate). The chain is 2-isopropylmalate synthase from Syntrophus aciditrophicus (strain SB).